The sequence spans 543 residues: CTP synthase (543 aa).

The tract at residues 1–265 (MARYIFITGG…DDEVLAAFAI (265 aa)) is amidoligase domain. Ser-13 lines the CTP pocket. Ser-13 serves as a coordination point for UTP. 14–19 (SLGKGL) lines the ATP pocket. Residue Tyr-54 coordinates L-glutamine. ATP is bound at residue Asp-71. Mg(2+)-binding residues include Asp-71 and Glu-139. CTP contacts are provided by residues 146 to 148 (DIE), 186 to 191 (KTKPTQ), and Lys-222. Residues 186 to 191 (KTKPTQ) and Lys-222 contribute to the UTP site. 238–240 (RDA) lines the ATP pocket. Residues 291–542 (TIAIVGKYTG…IEAALVRSRL (252 aa)) enclose the Glutamine amidotransferase type-1 domain. Residue Gly-353 coordinates L-glutamine. Cys-380 (nucleophile; for glutamine hydrolysis) is an active-site residue. Residues 381–384 (FGMQ), Glu-404, and Arg-470 contribute to the L-glutamine site. Residues His-515 and Glu-517 contribute to the active site.

This sequence belongs to the CTP synthase family. In terms of assembly, homotetramer.

It carries out the reaction UTP + L-glutamine + ATP + H2O = CTP + L-glutamate + ADP + phosphate + 2 H(+). The enzyme catalyses L-glutamine + H2O = L-glutamate + NH4(+). It catalyses the reaction UTP + NH4(+) + ATP = CTP + ADP + phosphate + 2 H(+). The protein operates within pyrimidine metabolism; CTP biosynthesis via de novo pathway; CTP from UDP: step 2/2. With respect to regulation, allosterically activated by GTP, when glutamine is the substrate; GTP has no effect on the reaction when ammonia is the substrate. The allosteric effector GTP functions by stabilizing the protein conformation that binds the tetrahedral intermediate(s) formed during glutamine hydrolysis. Inhibited by the product CTP, via allosteric rather than competitive inhibition. Catalyzes the ATP-dependent amination of UTP to CTP with either L-glutamine or ammonia as the source of nitrogen. Regulates intracellular CTP levels through interactions with the four ribonucleotide triphosphates. The chain is CTP synthase from Rhodopseudomonas palustris (strain HaA2).